A 450-amino-acid chain; its full sequence is Divalent metal cation transporter MntH (450 aa).

Transmembrane regions (helical) follow at residues leucine 34–isoleucine 54, glycine 59–leucine 81, isoleucine 108–valine 128, isoleucine 141–methionine 161, alanine 170–serine 190, glycine 212–leucine 232, isoleucine 263–phenylalanine 283, proline 305–alanine 325, serine 361–isoleucine 381, glutamine 383–leucine 403, and valine 422–valine 442.

The protein belongs to the NRAMP family.

The protein localises to the cell membrane. In terms of biological role, h(+)-stimulated, divalent metal cation uptake system. The sequence is that of Divalent metal cation transporter MntH from Staphylococcus aureus (strain MRSA252).